We begin with the raw amino-acid sequence, 202 residues long: Na(+)-translocating NADH-quinone reductase subunit E (202 aa).

6 consecutive transmembrane segments (helical) span residues 5–25 (VSLF…FLGM), 35–55 (VSTA…TVPL), 81–101 (FLGL…LEMF), 114–134 (GVFL…LFMV), 144–164 (VVYG…LAGI), and 180–200 (LGIT…FGGM).

Belongs to the NqrDE/RnfAE family. As to quaternary structure, composed of six subunits; NqrA, NqrB, NqrC, NqrD, NqrE and NqrF.

It is found in the cell inner membrane. The catalysed reaction is a ubiquinone + n Na(+)(in) + NADH + H(+) = a ubiquinol + n Na(+)(out) + NAD(+). In terms of biological role, NQR complex catalyzes the reduction of ubiquinone-1 to ubiquinol by two successive reactions, coupled with the transport of Na(+) ions from the cytoplasm to the periplasm. NqrA to NqrE are probably involved in the second step, the conversion of ubisemiquinone to ubiquinol. The sequence is that of Na(+)-translocating NADH-quinone reductase subunit E from Psychrobacter arcticus (strain DSM 17307 / VKM B-2377 / 273-4).